The sequence spans 344 residues: Succinylglutamate desuccinylase (344 aa).

Zn(2+) is bound by residues H63, E66, and H160. The active site involves E224.

This sequence belongs to the AspA/AstE family. Succinylglutamate desuccinylase subfamily. Zn(2+) serves as cofactor.

The catalysed reaction is N-succinyl-L-glutamate + H2O = L-glutamate + succinate. The protein operates within amino-acid degradation; L-arginine degradation via AST pathway; L-glutamate and succinate from L-arginine: step 5/5. Its function is as follows. Transforms N(2)-succinylglutamate into succinate and glutamate. The sequence is that of Succinylglutamate desuccinylase from Shewanella baltica (strain OS223).